The chain runs to 183 residues: CKLF-like MARVEL transmembrane domain-containing protein 6 (183 aa).

Residue Met1 is modified to N-acetylmethionine. Residues 1-39 (MENGAVYSPTTEEDPGPARGPRSGLAAYFFMGRLPLLRR) are Cytoplasmic-facing. Residue Ser8 is modified to Phosphoserine. The 128-residue stretch at 33 to 160 (RLPLLRRVLK…DFITMLYEKR (128 aa)) folds into the MARVEL domain. The chain crosses the membrane as a helical span at residues 40 to 60 (VLKGLQLLLSLLAFICEEVVS). Over 61-67 (QCTLCGG) the chain is Extracellular. The chain crosses the membrane as a helical span at residues 68 to 88 (LYFFEFVSCSAFLLSLLILIV). Over 89–106 (YCTPFYERVDTTKVKSSD) the chain is Cytoplasmic. The chain crosses the membrane as a helical span at residues 107–127 (FYITLGTGCVFLLASIIFVST). The Extracellular portion of the chain corresponds to 128 to 134 (HDRTSAE). The chain crosses the membrane as a helical span at residues 135–155 (IAAIVFGFIASFMFLLDFITM). The Cytoplasmic portion of the chain corresponds to 156-183 (LYEKRQESQLRKPENTTRAEALTEPLNA). The residue at position 171 (Thr171) is a Phosphothreonine.

It belongs to the chemokine-like factor family. As to quaternary structure, interacts with PD-L1/CD274 (via transmembrane domain); the interaction is direct. Interacts with CMTM4. Interacts with CD58, ARG1, ENO1 and TMPO. As to expression, expressed in the leukocytes, placenta and testis.

The protein resides in the cell membrane. It is found in the early endosome membrane. The protein localises to the recycling endosome membrane. Functionally, master regulator of recycling and plasma membrane expression of PD-L1/CD274, an immune inhibitory ligand critical for immune tolerance to self and antitumor immunity. Associates with both constitutive and IFNG-induced PD-L1/CD274 at recycling endosomes, where it protects PD-L1/CD274 from being targeted for lysosomal degradation, likely by preventing its STUB1-mediated ubiquitination. May stabilize PD-L1/CD274 expression on antigen presenting cells and potentiates inhibitory signaling by PDCD1/CD279, its receptor on T-cells, ultimately triggering T-cell anergy. The sequence is that of CKLF-like MARVEL transmembrane domain-containing protein 6 from Homo sapiens (Human).